The chain runs to 405 residues: Phosphoglycerate kinase (405 aa).

Substrate-binding positions include 24–26 (DFN), Arg-40, 63–66 (HLGR), Arg-122, and Arg-162. ATP-binding positions include Lys-212, Glu-331, and 361–364 (GGDS).

It belongs to the phosphoglycerate kinase family. In terms of assembly, monomer.

The protein localises to the cytoplasm. The catalysed reaction is (2R)-3-phosphoglycerate + ATP = (2R)-3-phospho-glyceroyl phosphate + ADP. Its pathway is carbohydrate degradation; glycolysis; pyruvate from D-glyceraldehyde 3-phosphate: step 2/5. The polypeptide is Phosphoglycerate kinase (Corynebacterium aurimucosum (strain ATCC 700975 / DSM 44827 / CIP 107346 / CN-1) (Corynebacterium nigricans)).